Reading from the N-terminus, the 161-residue chain is E3 ubiquitin ligase complex SCF subunit sconC (161 aa).

Positions 102–161 (ILAANYLDIKGLLDVGCKTVANMIKGKSPEEIRKTFNIQNDFTPEEEDQIRRENEWAEDR) are interaction with the F-box domain of F-box proteins.

It belongs to the SKP1 family. As to quaternary structure, component of the SCF (SKP1-CUL1-F-box protein) E3 ubiquitin ligase complexes.

Its pathway is protein modification; protein ubiquitination. Functionally, essential component of the SCF (SKP1-CUL1-F-box protein) E3 ubiquitin ligase complexes, which mediate the ubiquitination and subsequent proteasomal degradation of target proteins. Controls sulfur metabolite repression, probably by mediating the inactivation or degradation of the metR transcription factor. The polypeptide is E3 ubiquitin ligase complex SCF subunit sconC (sconC) (Aspergillus flavus (strain ATCC 200026 / FGSC A1120 / IAM 13836 / NRRL 3357 / JCM 12722 / SRRC 167)).